We begin with the raw amino-acid sequence, 591 residues long: Pyruvate kinase 2 (591 aa).

Position 38 (Arg38) interacts with substrate. K(+) contacts are provided by Asn40, Ser42, and Asp72. 40-43 provides a ligand contact to ATP; sequence NFSH. Arg79 and Lys164 together coordinate ATP. Glu229 serves as a coordination point for Mg(2+). The substrate site is built by Gly252, Asp253, and Thr285. Asp253 is a Mg(2+) binding site.

The protein belongs to the pyruvate kinase family. It in the C-terminal section; belongs to the PEP-utilizing enzyme family. In terms of assembly, homotetramer. Mg(2+) serves as cofactor. K(+) is required as a cofactor.

The catalysed reaction is pyruvate + ATP = phosphoenolpyruvate + ADP + H(+). It participates in carbohydrate degradation; glycolysis; pyruvate from D-glyceraldehyde 3-phosphate: step 5/5. The protein is Pyruvate kinase 2 (pyk2) of Synechocystis sp. (strain ATCC 27184 / PCC 6803 / Kazusa).